The primary structure comprises 389 residues: MVAEHPTPPQPHQPPPMDSTAGSGIAAPAAAAVCDLRMEPKIPEPFVWPNGDARPASAAELDMPVVDVGVLRDGDAEGLRRAAAQVAAACATHGFFQVSEHGVDAALARAALDGASDFFRLPLAEKRRARRVPGTVSGYTSAHADRFASKLPWKETLSFGFHDRAAAPVVADYFSSTLGPDFAPMGRVYQKYCEEMKELSLTIMELLELSLGVERGYYREFFADSSSIMRCNYYPPCPEPERTLGTGPHCDPTALTILLQDDVGGLEVLVDGEWRPVSPVPGAMVINIGDTFMALSNGRYKSCLHRAVVNQRRERRSLAFFLCPREDRVVRPPPSAATPQHYPDFTWADLMRFTQRHYRADTRTLDAFTRWLAPPAADAAATAQVEAAS.

A compositionally biased stretch (pro residues) spans 1–17 (MVAEHPTPPQPHQPPPM). The segment at 1–23 (MVAEHPTPPQPHQPPPMDSTAGS) is disordered. A Fe2OG dioxygenase domain is found at 224–324 (DSSSIMRCNY…RRSLAFFLCP (101 aa)). Residues histidine 249, aspartate 251, and histidine 305 each coordinate Fe cation. The active site involves arginine 315.

Belongs to the iron/ascorbate-dependent oxidoreductase family. GA20OX subfamily. Fe cation serves as cofactor. The cofactor is L-ascorbate.

It catalyses the reaction gibberellin A12 + 2 2-oxoglutarate + 3 O2 + H(+) = gibberellin A9 + 2 succinate + 3 CO2 + 2 H2O. It carries out the reaction gibberellin A53 + 2 2-oxoglutarate + 3 O2 + H(+) = gibberellin A20 + 2 succinate + 3 CO2 + 2 H2O. In terms of biological role, key oxidase enzyme in the biosynthesis of gibberellin that catalyzes the conversion of GA53 to GA20 via a three-step oxidation at C-20 of the GA skeleton. This Oryza sativa subsp. indica (Rice) protein is Gibberellin 20 oxidase 2 (20ox2).